Here is a 420-residue protein sequence, read N- to C-terminus: UDP-N-acetylglucosamine 1-carboxyvinyltransferase (420 aa).

22–23 (KN) is a phosphoenolpyruvate binding site. Arg92 contacts UDP-N-acetyl-alpha-D-glucosamine. Cys116 acts as the Proton donor in catalysis. Position 116 is a 2-(S-cysteinyl)pyruvic acid O-phosphothioketal (Cys116). UDP-N-acetyl-alpha-D-glucosamine is bound by residues 121-125 (RPVDL), 161-164 (KVSV), Asp306, and Ile328.

This sequence belongs to the EPSP synthase family. MurA subfamily.

Its subcellular location is the cytoplasm. The catalysed reaction is phosphoenolpyruvate + UDP-N-acetyl-alpha-D-glucosamine = UDP-N-acetyl-3-O-(1-carboxyvinyl)-alpha-D-glucosamine + phosphate. Its pathway is cell wall biogenesis; peptidoglycan biosynthesis. Its function is as follows. Cell wall formation. Adds enolpyruvyl to UDP-N-acetylglucosamine. The chain is UDP-N-acetylglucosamine 1-carboxyvinyltransferase from Yersinia pseudotuberculosis serotype O:1b (strain IP 31758).